The primary structure comprises 881 residues: Interference hedgehog (881 aa).

The first 26 residues, 1-26 (MSSSSSSLLLMMLLLLLLLLTSKLEA), serve as a signal peptide directing secretion. The Extracellular portion of the chain corresponds to 27 to 693 (IPVLSSTSPS…NHNETYSLNP (667 aa)). 4 consecutive Ig-like C2-type domains span residues 37–138 (PGVR…IARL), 128–228 (PLVV…IPSS), 242–330 (PYLL…YINV), and 336–425 (PVIV…LQVN). 3 cysteine pairs are disulfide-bonded: Cys60–Cys122, Cys167–Cys212, and Cys266–Cys314. N-linked (GlcNAc...) asparagine glycosylation is found at Asn75, Asn98, Asn194, Asn201, Asn282, Asn349, Asn381, Asn430, and Asn455. A disulfide bridge links Cys358 with Cys407. 2 consecutive Fibronectin type-III domains span residues 450-558 (PPSA…LQRG) and 566-661 (VPEL…TQRS). Heparin is bound by residues Arg486, Lys492, and Lys494. Asn517 carries an N-linked (GlcNAc...) asparagine glycan. Arg532 is a heparin binding site. The N-linked (GlcNAc...) asparagine glycan is linked to Asn548. Positions 655 to 685 (QGRTQRSKLTTTEQPIQQKGGDRNVNTTPNH) are disordered. Residues 656 to 671 (GRTQRSKLTTTEQPIQ) show a composition bias toward polar residues. A glycan (N-linked (GlcNAc...) asparagine) is linked at Asn686. A helical membrane pass occupies residues 694 to 714 (LLTGTIGGGALLLLLLIAFSF). Residues 715–881 (CLCRRKNRNG…SSGSLNSVGV (167 aa)) are Cytoplasmic-facing. Disordered stretches follow at residues 768–791 (NPLD…NSPH) and 809–881 (PTTY…SVGV). Positions 837-855 (PGSNNNLQQIGSETTTTGQ) are enriched in polar residues. A compositionally biased stretch (low complexity) spans 865–881 (SSRSENLSSGSLNSVGV).

The protein belongs to the immunoglobulin superfamily. IHOG family. As to quaternary structure, homodimer. Heterotetramer; 2 iHog chains bind 2 hh chains when facilitated by heparin, heparin is required to promote high-affinity interactions between hh and iHog.

It localises to the membrane. In terms of biological role, mediates response to the active Hedgehog (Hh) protein signal in embryos, functioning upstream or at the level of patched (ptc). The chain is Interference hedgehog from Drosophila willistoni (Fruit fly).